Consider the following 301-residue polypeptide: Probable cyclic nucleotide phosphodiesterase RER_40650 (301 aa).

Fe cation is bound by residues aspartate 20, histidine 22, aspartate 61, asparagine 95, histidine 167, histidine 205, and histidine 207. AMP is bound by residues histidine 22, aspartate 61, and asparagine 95–histidine 96. Histidine 207 is an AMP binding site.

The protein belongs to the cyclic nucleotide phosphodiesterase class-III family. It depends on Fe(2+) as a cofactor.

This Rhodococcus erythropolis (strain PR4 / NBRC 100887) protein is Probable cyclic nucleotide phosphodiesterase RER_40650.